Here is a 474-residue protein sequence, read N- to C-terminus: Gamma-aminobutyric acid receptor subunit gamma-2 (474 aa).

Positions Met1–Ser38 are cleaved as a signal peptide. At Gln39–Phe274 the chain is on the extracellular side. Asn51 and Asn128 each carry an N-linked (GlcNAc...) asparagine glycan. A disulfide bridge connects residues Cys189 and Cys203. Asn246 carries N-linked (GlcNAc...) asparagine glycosylation. Residues Thr275–Ile295 form a helical membrane-spanning segment. Topologically, residues Asn296–Pro301 are cytoplasmic. A helical transmembrane segment spans residues Ala302–Ala321. Over Arg322 to Ala333 the chain is Extracellular. A helical membrane pass occupies residues Met334–Phe358. Over Val359 to Ser450 the chain is Cytoplasmic. Ser381 carries the phosphoserine; by PKC modification. Residues Tyr451–Leu472 traverse the membrane as a helical segment. Residues Tyr473–Leu474 are Extracellular-facing.

Belongs to the ligand-gated ion channel (TC 1.A.9) family. Gamma-aminobutyric acid receptor (TC 1.A.9.5) subfamily. GABRG2 sub-subfamily. As to quaternary structure, heteropentamer, formed by a combination of alpha (GABRA1-6), beta (GABRB1-3), gamma (GABRG1-3), delta (GABRD), epsilon (GABRE), rho (GABRR1-3), pi (GABRP) and theta (GABRQ) chains, each subunit exhibiting distinct physiological and pharmacological properties. Interacts with GABARAP. Interacts with KIF21B. Identified in a complex of 720 kDa composed of LHFPL4, NLGN2, GABRA1, GABRB2, GABRG2 and GABRB3. Interacts with LHFPL4. Interacts with SHISA7; interaction leads to the regulation of GABA(A) receptor trafficking, channel deactivation kinetics and pharmacology. In terms of processing, glycosylated. Palmitoylated by ZDHHC3/GODZ; required for the accumulation of GABA(A) receptors at the postsynaptic membrane of inhibitory GABAergic synapses. As to expression, expressed in brain neurons (at protein level).

It localises to the postsynaptic cell membrane. It is found in the cell membrane. The protein localises to the cell projection. The protein resides in the dendrite. Its subcellular location is the cytoplasmic vesicle membrane. The catalysed reaction is chloride(in) = chloride(out). Its activity is regulated as follows. Allosterically activated by benzodiazepines. Activated by pentobarbital. Inhibited by the antagonist bicuculline. Inhibited by zinc ions. Potentiated by histamine. Functionally, gamma subunit of the heteropentameric ligand-gated chloride channel gated by gamma-aminobutyric acid (GABA), a major inhibitory neurotransmitter in the brain. GABA-gated chloride channels, also named GABA(A) receptors (GABAAR), consist of five subunits arranged around a central pore and contain GABA active binding site(s) located at the alpha and beta subunit interface(s). When activated by GABA, GABAARs selectively allow the flow of chloride anions across the cell membrane down their electrochemical gradient. Gamma-2/GABRG2-containing GABAARs are found at both synaptic and extrasynaptic sites. Chloride influx into the postsynaptic neuron following GABAAR opening decreases the neuron ability to generate a new action potential, thereby reducing nerve transmission. GABAARs containing alpha-1 and beta-2 or -3 subunits exhibit synaptogenic activity; the gamma-2 subunit being necessary but not sufficient to induce rapid synaptic contacts formation. Extrasynaptic gamma-2-containing receptors contribute to the tonic GABAergic inhibition. GABAARs function also as histamine receptor where histamine binds at the interface of two neighboring beta subunits and potentiates GABA response in a gamma-2 subunit-controlled manner. The polypeptide is Gamma-aminobutyric acid receptor subunit gamma-2 (Mus musculus (Mouse)).